Consider the following 289-residue polypeptide: Complement C1q tumor necrosis factor-related protein 7 (289 aa).

The first 16 residues, 1–16, serve as a signal peptide directing secretion; that stretch reads MIVLLYVTSLAICASG. The interval 36 to 134 is disordered; that stretch reads IPGLPGPPGP…GDRGDQGDPG (99 aa). Residues 38–139 enclose the Collagen-like domain; that stretch reads GLPGPPGPPG…QGDPGLPGVC (102 aa). Low complexity predominate over residues 48 to 61; the sequence is ANGSPGPHGRIGLP. The segment covering 63–76 has biased composition (basic and acidic residues); it reads RDGRDGRKGEKGEK. Low complexity predominate over residues 78 to 91; sequence TAGLKGKTGPLGLA. A compositionally biased stretch (basic and acidic residues) spans 93 to 102; it reads EKGDQGETGK. In terms of domain architecture, C1q spans 143–279; it reads SIVLKSAFSV…GFLLYVDTDY (137 aa).

Its subcellular location is the secreted. This chain is Complement C1q tumor necrosis factor-related protein 7 (C1qtnf7), found in Mus musculus (Mouse).